We begin with the raw amino-acid sequence, 508 residues long: Transcription termination factor MTERF4, chloroplastic (508 aa).

A chloroplast-targeting transit peptide spans 1–79 (MMKSLFLFSA…PSLLDMERGR (79 aa)). Residues 28 to 49 (RLTASASTSASSPPRAGCSRGP) are compositionally biased toward low complexity. Disordered regions lie at residues 28–69 (RLTA…LYAR) and 475–508 (FDTNTLSERVEDEVEDEDLDEDSDYDSTDDEFIE). Residues 484 to 508 (VEDEVEDEDLDEDSDYDSTDDEFIE) show a composition bias toward acidic residues.

The protein belongs to the mTERF family.

It localises to the plastid. Its subcellular location is the chloroplast stroma. Functionally, transcription termination factor required for processing and steady-state levels of plastid transcripts. Required for splicing of the chloroplastic group II intron. Required for the accumulation of 16S and 23S ribosomes. This is Transcription termination factor MTERF4, chloroplastic from Oryza sativa subsp. japonica (Rice).